Here is a 306-residue protein sequence, read N- to C-terminus: tRNA dimethylallyltransferase (306 aa).

Residue 11–18 participates in ATP binding; it reads APTAAGKT. 13-18 serves as a coordination point for substrate; sequence TAAGKT.

This sequence belongs to the IPP transferase family. As to quaternary structure, monomer. Mg(2+) serves as cofactor.

It carries out the reaction adenosine(37) in tRNA + dimethylallyl diphosphate = N(6)-dimethylallyladenosine(37) in tRNA + diphosphate. Catalyzes the transfer of a dimethylallyl group onto the adenine at position 37 in tRNAs that read codons beginning with uridine, leading to the formation of N6-(dimethylallyl)adenosine (i(6)A). This Deinococcus radiodurans (strain ATCC 13939 / DSM 20539 / JCM 16871 / CCUG 27074 / LMG 4051 / NBRC 15346 / NCIMB 9279 / VKM B-1422 / R1) protein is tRNA dimethylallyltransferase.